The sequence spans 926 residues: Periplasmic nitrate reductase (926 aa).

Residues 1 to 30 (MNRRDFIKSAAASAACASAGIAIPANLSAA) constitute a signal peptide (tat-type signal). The 4Fe-4S Mo/W bis-MGD-type domain maps to 37–93 (WRWDKAACRFCGTGCGIMVATKEGKIVAVKGDPEAPVNRGLNCIKGYFNAKIMYGED). Cys-44, Cys-47, Cys-51, and Cys-79 together coordinate [4Fe-4S] cluster. Mo-bis(molybdopterin guanine dinucleotide) contacts are provided by residues Lys-81, Gln-149, Asn-174, Cys-178, 211 to 218 (WGANMAEM), Met-419, Gln-423, Asn-529, 554 to 555 (SD), Lys-577, Asp-604, and 816 to 825 (TGRVLEHWHS). Trp-892 provides a ligand contact to substrate. Asn-900 and Lys-917 together coordinate Mo-bis(molybdopterin guanine dinucleotide).

Belongs to the prokaryotic molybdopterin-containing oxidoreductase family. NasA/NapA/NarB subfamily. Component of the periplasmic nitrate reductase NapAB complex composed of NapA and NapB. It depends on [4Fe-4S] cluster as a cofactor. Mo-bis(molybdopterin guanine dinucleotide) is required as a cofactor. In terms of processing, predicted to be exported by the Tat system. The position of the signal peptide cleavage has not been experimentally proven.

It is found in the periplasm. The catalysed reaction is 2 Fe(II)-[cytochrome] + nitrate + 2 H(+) = 2 Fe(III)-[cytochrome] + nitrite + H2O. In terms of biological role, catalytic subunit of the periplasmic nitrate reductase complex NapAB. Receives electrons from NapB and catalyzes the reduction of nitrate to nitrite. The chain is Periplasmic nitrate reductase from Campylobacter curvus (strain 525.92).